Reading from the N-terminus, the 315-residue chain is Phosphatidylglycerol--prolipoprotein diacylglyceryl transferase (315 aa).

A run of 2 helical transmembrane segments spans residues 19-39 (FTIH…VWIL) and 93-113 (VWEG…VAFL). Residue Arg-141 participates in a 1,2-diacyl-sn-glycero-3-phospho-(1'-sn-glycerol) binding. The next 2 membrane-spanning stretches (helical) occupy residues 188–208 (LFHP…ALII) and 256–276 (VWTA…LYQY).

It belongs to the Lgt family.

It is found in the cell membrane. It catalyses the reaction L-cysteinyl-[prolipoprotein] + a 1,2-diacyl-sn-glycero-3-phospho-(1'-sn-glycerol) = an S-1,2-diacyl-sn-glyceryl-L-cysteinyl-[prolipoprotein] + sn-glycerol 1-phosphate + H(+). It participates in protein modification; lipoprotein biosynthesis (diacylglyceryl transfer). In terms of biological role, catalyzes the transfer of the diacylglyceryl group from phosphatidylglycerol to the sulfhydryl group of the N-terminal cysteine of a prolipoprotein, the first step in the formation of mature lipoproteins. The protein is Phosphatidylglycerol--prolipoprotein diacylglyceryl transferase of Bifidobacterium longum (strain DJO10A).